The chain runs to 360 residues: DNA replication and repair protein RecF (360 aa).

30–37 contributes to the ATP binding site; sequence GHNGSGKT.

This sequence belongs to the RecF family.

The protein resides in the cytoplasm. The RecF protein is involved in DNA metabolism; it is required for DNA replication and normal SOS inducibility. RecF binds preferentially to single-stranded, linear DNA. It also seems to bind ATP. In Actinobacillus pleuropneumoniae serotype 3 (strain JL03), this protein is DNA replication and repair protein RecF.